The primary structure comprises 372 residues: 4-hydroxy-3-methylbut-2-en-1-yl diphosphate synthase (flavodoxin) (372 aa).

The [4Fe-4S] cluster site is built by Cys-270, Cys-273, Cys-305, and Glu-312.

It belongs to the IspG family. [4Fe-4S] cluster serves as cofactor.

It catalyses the reaction (2E)-4-hydroxy-3-methylbut-2-enyl diphosphate + oxidized [flavodoxin] + H2O + 2 H(+) = 2-C-methyl-D-erythritol 2,4-cyclic diphosphate + reduced [flavodoxin]. It functions in the pathway isoprenoid biosynthesis; isopentenyl diphosphate biosynthesis via DXP pathway; isopentenyl diphosphate from 1-deoxy-D-xylulose 5-phosphate: step 5/6. Functionally, converts 2C-methyl-D-erythritol 2,4-cyclodiphosphate (ME-2,4cPP) into 1-hydroxy-2-methyl-2-(E)-butenyl 4-diphosphate. The sequence is that of 4-hydroxy-3-methylbut-2-en-1-yl diphosphate synthase (flavodoxin) from Vibrio campbellii (strain ATCC BAA-1116).